We begin with the raw amino-acid sequence, 411 residues long: Na(+)-translocating NADH-quinone reductase subunit F (411 aa).

The chain crosses the membrane as a helical span at residues 5 to 25 (VILALGIAAFTVIVLVLVAII). The 2Fe-2S ferredoxin-type domain maps to 36–130 (GDITIGINDD…NMEVELPEEI (95 aa)). The [2Fe-2S] cluster site is built by Cys-73, Cys-79, Cys-82, and Cys-114. One can recognise an FAD-binding FR-type domain in the interval 133 to 273 (VKKWECTVIS…SGPFGEFFAK (141 aa)).

It belongs to the NqrF family. Composed of six subunits; NqrA, NqrB, NqrC, NqrD, NqrE and NqrF. Requires [2Fe-2S] cluster as cofactor. The cofactor is FAD.

Its subcellular location is the cell inner membrane. It carries out the reaction a ubiquinone + n Na(+)(in) + NADH + H(+) = a ubiquinol + n Na(+)(out) + NAD(+). In terms of biological role, NQR complex catalyzes the reduction of ubiquinone-1 to ubiquinol by two successive reactions, coupled with the transport of Na(+) ions from the cytoplasm to the periplasm. The first step is catalyzed by NqrF, which accepts electrons from NADH and reduces ubiquinone-1 to ubisemiquinone by a one-electron transfer pathway. This chain is Na(+)-translocating NADH-quinone reductase subunit F, found in Haemophilus influenzae (strain PittEE).